Here is a 588-residue protein sequence, read N- to C-terminus: Serine/threonine-protein phosphatase 2A 65 kDa regulatory subunit A alpha isoform (588 aa).

HEAT repeat units lie at residues 2 to 42 (AMVD…ALGE), 44 to 80 (RTRK…FVGG), 81 to 119 (IEFA…QMKE), 158 to 196 (DVLK…TVES), 197 to 235 (TFLI…LLEP), 236 to 274 (QDCV…AVGP), 275 to 313 (DCTR…LLNP), 315 to 352 (LAIQ…ILGK), 353 to 391 (DSTI…VIGI), 393 to 430 (LLSQ…QLGI), 432 to 469 (FFDD…EFGP), 470 to 508 (EWAM…VMGS), 509 to 547 (EITC…IVDQ), and 549 to 586 (VVDK…STAA).

This sequence belongs to the phosphatase 2A regulatory subunit A family. In terms of assembly, PP2A consists of a common heterodimeric core enzyme, composed of a 36 kDa catalytic subunit (subunit C) and a 65 kDa constant regulatory subunit (subunit A), that associates with a variety of regulatory subunits such as subunits B (the R2/B/PR55/B55, R3/B''/PR72/PR130/PR59 and R5/B'/B56 families) and the regulatory subunits TON2. Interacts with CYP20-1/ROC7. Also interacts with phosphatidic acid (PA), a lipid signaling molecule. Interacts with CHIP. Interacts with SIC/RON3. Ubiquitinated. CHIP-mediated ubiquitination enhances phosphatase activity after an abiotic stress such as low temperature or darkness. As to expression, mostly expressed in cell-dividing tissues such as apical meristems. Ubiquitous, with higher levels in roots and flowers (at protein level).

The protein localises to the cytoplasm. It is found in the cytosol. Its subcellular location is the nucleus. Functionally, the A subunit of protein phosphatase 2A serves as a scaffolding molecule to coordinate the assembly of the catalytic subunit and a variable regulatory B subunit. Seems to act as a positive regulator of PP2A catalytic activity. Confers resistance to phosphatase inhibitors such as okadaic acid and cantharidin. Involved during developmental process such as seedling and floral developments, root gravitropism, and stomatal opening regulation. Involved in the regulation of auxin efflux, especially during basipetal (tips to base) auxin transport in roots, and appears to contribute to the perception of auxin efflux inhibitors such as 1-N-naphthylphthalamic acid (NPA) and to semicarbazone I (substituted phenylsemicarbazone of 2-acetylarylcarboxylic acids) (SCB-I). Modulates the magnitude of ethylene response in the hypocotyl and stem, and functions as a general positive transducer of early ABA signaling. The holoenzyme composed of PP2AA1, PP2A4 and B'ZETA or B'ETA acts as a negative regulator of plant innate immunity by controlling BAK1 phosphorylation state and activation in surface-localized immune receptor complexes. This is Serine/threonine-protein phosphatase 2A 65 kDa regulatory subunit A alpha isoform (PP2AA1) from Arabidopsis thaliana (Mouse-ear cress).